We begin with the raw amino-acid sequence, 419 residues long: Hyaluronan synthase (419 aa).

Transmembrane regions (helical) follow at residues 8-28, 33-53, 318-338, 345-365, and 376-396; these read LIVL…MYLF, VGIY…LSFL, IVAL…VAIG, AIQL…IVAL, and PASF…LQPL.

The protein belongs to the NodC/HAS family. Requires Mg(2+) as cofactor.

It localises to the cell membrane. It catalyses the reaction [hyaluronan](n) + UDP-N-acetyl-alpha-D-glucosamine = N-acetyl-beta-D-glucosaminyl-(1-&gt;4)-[hyaluronan](n) + UDP + H(+). The enzyme catalyses N-acetyl-beta-D-glucosaminyl-(1-&gt;4)-[hyaluronan](n) + UDP-alpha-D-glucuronate = [hyaluronan](n+1) + UDP + H(+). The protein operates within glycan biosynthesis; hyaluronan biosynthesis. Functionally, glycosaminoglycan synthesis. The hyaluronic acid capsule is involved in the pathogenicity of group A Streptococci; it may be the major virulence determinant. The polypeptide is Hyaluronan synthase (hasA) (Streptococcus pyogenes serotype M6 (strain ATCC BAA-946 / MGAS10394)).